Reading from the N-terminus, the 116-residue chain is uncharacterized protein (116 aa).

This is an uncharacterized protein from Aquifex aeolicus (strain VF5).